We begin with the raw amino-acid sequence, 137 residues long: Small ribosomal subunit protein uS9 (137 aa).

A disordered region spans residues 105 to 137 (LKAEGYLTRDPRAKERKKYGLHKARKAPQYSKR). Positions 118 to 137 (KERKKYGLHKARKAPQYSKR) are enriched in basic residues.

It belongs to the universal ribosomal protein uS9 family.

The polypeptide is Small ribosomal subunit protein uS9 (rpsI) (Synechocystis sp. (strain ATCC 27184 / PCC 6803 / Kazusa)).